A 141-amino-acid chain; its full sequence is Small ribosomal subunit protein eS17z (141 aa).

This sequence belongs to the eukaryotic ribosomal protein eS17 family.

In Arabidopsis thaliana (Mouse-ear cress), this protein is Small ribosomal subunit protein eS17z (RPS17A).